The following is a 157-amino-acid chain: Phosphopantetheine adenylyltransferase (157 aa).

Threonine 10 contacts substrate. ATP is bound by residues 10–11 (TF) and histidine 18. Substrate is bound by residues lysine 42, leucine 74, and arginine 88. Residues 89 to 91 (GLR), glutamate 99, and 124 to 130 (NAFISSS) each bind ATP.

This sequence belongs to the bacterial CoaD family. Homohexamer. The cofactor is Mg(2+).

It is found in the cytoplasm. The catalysed reaction is (R)-4'-phosphopantetheine + ATP + H(+) = 3'-dephospho-CoA + diphosphate. The protein operates within cofactor biosynthesis; coenzyme A biosynthesis; CoA from (R)-pantothenate: step 4/5. Its function is as follows. Reversibly transfers an adenylyl group from ATP to 4'-phosphopantetheine, yielding dephospho-CoA (dPCoA) and pyrophosphate. The protein is Phosphopantetheine adenylyltransferase of Helicobacter pylori (strain P12).